We begin with the raw amino-acid sequence, 535 residues long: T-complex protein 1 subunit epsilon (535 aa).

The protein belongs to the TCP-1 chaperonin family. In terms of assembly, heterooligomeric complex of about 850 to 900 kDa that forms two stacked rings, 12 to 16 nm in diameter.

It is found in the cytoplasm. Functionally, molecular chaperone; assists the folding of proteins upon ATP hydrolysis. Known to play a role, in vitro, in the folding of actin and tubulin. This is T-complex protein 1 subunit epsilon from Arabidopsis thaliana (Mouse-ear cress).